Reading from the N-terminus, the 86-residue chain is Cell division topological specificity factor (86 aa).

This sequence belongs to the MinE family.

Its function is as follows. Prevents the cell division inhibition by proteins MinC and MinD at internal division sites while permitting inhibition at polar sites. This ensures cell division at the proper site by restricting the formation of a division septum at the midpoint of the long axis of the cell. The sequence is that of Cell division topological specificity factor from Shewanella frigidimarina (strain NCIMB 400).